Here is a 76-residue protein sequence, read N- to C-terminus: Alpha/kappa-conotoxin-like fe14.2 (76 aa).

The first 24 residues, 1 to 24 (MPSVRSVTCCCLLWMMLSVQLVTP), serve as a signal peptide directing secretion. A propeptide spanning residues 25–39 (GSPGTAQLSGQRTAR) is cleaved from the precursor. Intrachain disulfides connect cysteine 46–cysteine 61 and cysteine 50–cysteine 63. Residue arginine 64 is modified to Arginine amide. Residues 65–76 (GKRDVVSSSMAV) constitute a propeptide that is removed on maturation.

This sequence belongs to the conotoxin J superfamily. Expressed by the venom duct.

The protein localises to the secreted. Its function is as follows. Highly inhibits both nicotinic acetylcholine receptors (neuronal (alpha-3/beta-4) and muscular (alpha-1/beta-1/epsilon/delta) subtypes) and the voltage-gated potassium channel Kv1.6/KCNA6 subtype. The sequence is that of Alpha/kappa-conotoxin-like fe14.2 from Conus ferrugineus (Cone snail).